The sequence spans 214 residues: Large ribosomal subunit protein uL16 (214 aa).

R32 is subject to Citrulline. A Glycyl lysine isopeptide (Lys-Gly) (interchain with G-Cter in SUMO2) cross-link involves residue K175. Residue K188 forms a Glycyl lysine isopeptide (Lys-Gly) (interchain with G-Cter in ubiquitin) linkage.

The protein belongs to the universal ribosomal protein uL16 family. As to quaternary structure, component of the large ribosomal subunit. Mature ribosomes consist of a small (40S) and a large (60S) subunit. The 40S subunit contains about 33 different proteins and 1 molecule of RNA (18S). The 60S subunit contains about 49 different proteins and 3 molecules of RNA (28S, 5.8S and 5S). Citrullinated by PADI4. In terms of processing, ufmylated by UFL1.

It localises to the cytoplasm. Component of the large ribosomal subunit. Plays a role in the formation of actively translating ribosomes. May play a role in the embryonic brain development. In Homo sapiens (Human), this protein is Large ribosomal subunit protein uL16.